Here is a 179-residue protein sequence, read N- to C-terminus: MIIYLHGFDSNSPGNHEKVLQLQFIDSDVRFINYSTLHPKHDMQHLLKEVHKAIEQSGDPNPLICGVGLGGYWSERIGFLCGIKQVIFNPNLHPELTMQGRIDRPEEYEDISTKCVEKFRAKNQGRCLVILSRQDEIHDNQKTAQELQDYYDIVWDDTQTHKFKKISHHLQAMKAFKAA.

Belongs to the UPF0227 family.

The chain is UPF0227 protein VC0395_A1482/VC395_2007 from Vibrio cholerae serotype O1 (strain ATCC 39541 / Classical Ogawa 395 / O395).